Reading from the N-terminus, the 116-residue chain is Large ribosomal subunit protein bL17 (116 aa).

This sequence belongs to the bacterial ribosomal protein bL17 family. Part of the 50S ribosomal subunit. Contacts protein L32.

The protein is Large ribosomal subunit protein bL17 of Synechococcus elongatus (strain ATCC 33912 / PCC 7942 / FACHB-805) (Anacystis nidulans R2).